Consider the following 282-residue polypeptide: NADPH-dependent 7-cyano-7-deazaguanine reductase (282 aa).

88-90 (IES) serves as a coordination point for substrate. 90 to 91 (SK) contacts NADPH. Residue cysteine 190 is the Thioimide intermediate of the active site. Aspartate 197 (proton donor) is an active-site residue. Position 229–230 (229–230 (HE)) interacts with substrate. 258–259 (RG) contributes to the NADPH binding site.

Belongs to the GTP cyclohydrolase I family. QueF type 2 subfamily. As to quaternary structure, homodimer.

The protein resides in the cytoplasm. It catalyses the reaction 7-aminomethyl-7-carbaguanine + 2 NADP(+) = 7-cyano-7-deazaguanine + 2 NADPH + 3 H(+). It functions in the pathway tRNA modification; tRNA-queuosine biosynthesis. Catalyzes the NADPH-dependent reduction of 7-cyano-7-deazaguanine (preQ0) to 7-aminomethyl-7-deazaguanine (preQ1). This Escherichia coli (strain SMS-3-5 / SECEC) protein is NADPH-dependent 7-cyano-7-deazaguanine reductase.